The chain runs to 247 residues: Probable transcriptional regulatory protein YebC (247 aa).

The disordered stretch occupies residues 1-20 (MAGHSKWANTRHRKAAQDAK).

The protein belongs to the TACO1 family.

It localises to the cytoplasm. This is Probable transcriptional regulatory protein YebC from Salmonella arizonae (strain ATCC BAA-731 / CDC346-86 / RSK2980).